Here is a 143-residue protein sequence, read N- to C-terminus: Mediator of RNA polymerase II transcription subunit 9 (143 aa).

Residues 84 to 141 (QDCNHKIFELQKRFESAREQIRQLPGIDYNKDEQLQRLELLRNQFKLKQQLIRKYKDT) are a coiled coil.

The protein belongs to the Mediator complex subunit 9 family. Component of the Mediator complex.

It is found in the nucleus. Its function is as follows. Component of the Mediator complex, a coactivator involved in the regulated transcription of nearly all RNA polymerase II-dependent genes. Mediator functions as a bridge to convey information from gene-specific regulatory proteins to the basal RNA polymerase II transcription machinery. Mediator is recruited to promoters by direct interactions with regulatory proteins and serves as a scaffold for the assembly of a functional preinitiation complex with RNA polymerase II and the general transcription factors. This is Mediator of RNA polymerase II transcription subunit 9 (MED9) from Drosophila pseudoobscura pseudoobscura (Fruit fly).